A 221-amino-acid polypeptide reads, in one-letter code: MANEEVILLDFWPSMFGMRLRIALAEKEIKYEYKEEDLRNKSPLLLQMNPIHKKIPVLIHNGKPICESIIAVEYIEEVWKDKAPNLLPSDPYDRAQARFWADYIDKKLYDFGRKLWTTKGEEQEAAKKDFIECLKVLEGALGDKPYFGGESFGFVDIALIGYYSWFYAYETFGNFSTEAECPKFVAWAKRCMQRESVAKSLPDQPKVLEFVKVLRQKFGLE.

The region spanning Glu4–Ala83 is the GST N-terminal domain. Glutathione contacts are provided by residues Ser14, Lys41, Ile55, and Glu67–Ser68. Residues Asp90 to Leu214 enclose the GST C-terminal domain.

This sequence belongs to the GST superfamily. HSP26 family. In terms of tissue distribution, root tip-specific expression.

The catalysed reaction is RX + glutathione = an S-substituted glutathione + a halide anion + H(+). The protein is Probable glutathione S-transferase of Nicotiana tabacum (Common tobacco).